We begin with the raw amino-acid sequence, 1575 residues long: MIVTFVALALSCCTPQVTADCGLRPRLQSAIITGRIVGGEMAKLGEFPWQAAFLYKHVQVCGGTIIDTTWILSAAHCFDPHMYKLQSIKKEDALIRVADLDKTDDTDEGEMTFEVKDIIIHEQYNRQTFDNDIMLIEILGSITYGPTVQPACIPGANDAVADGTKCLISGWGDTQDHVHNRWPDKLQKAQVEVFARAQCLAAYPESTENMICAGLRTGGIDSCQGDSGGPLACPFTENTAQPTFFLQGIVSWGRGCALDGFPGVYTEVRKYSSWIANYTQHLLQDRNADVATFTITGDPCSSNGSIISGSEGDFSSPGFYSGSYTDNLDCKWIIQIPDIGSRIQLSFTEFGVEYHTFCWYDDVKVYSGAVGNIASADAADLLGSHCGMNIPSDLLSDGSSMTVIFHSDYMTHTLGFRAVFHAVSADVSQSGCGGIRELLTDHGEFSSKHYPNYYDADSICECFITAPTGKTIELNFLSFRLAGSDCADNVAIYDGLNSSYPRIIRLCINQGFNVTVPSSSNTMFVSFKTDGQVQDVGFEAYYYFSSNGNSTDDTDYSQCGFSSTPINADQTAARIVNGDIAIAGSWPWQISIRLCDTCNHYCGGSIISPSWIVTAAHCIESSAHITYIRAGDFDRFTIEISETIVPVAQIFIHPDYQKDLPNNADIALLKLANPLSYSSTIRPVCFPSQISTIPEENAECYVTGWGLTEENVMAQKLREAKLPLMPYDQCLNVYTSYVLNENMLCAGNISSGIDTCLGDSGGPFVCRKSRNDPWILYGVSAFGRECGSSRYPGVYTKVTRYIDWIIATANVSTVTSVVEEHDPTEFEQGCIQLLVLSNHEGDLSSPEYPELYGEGMLDCQWKIVLMDRTKSLNINFRFSHSQQDTAAACSLANIRISESYSDGTVGRQYGPYCGSSESILISSLHDLVVSLHNSQSQVKIGLKLEYRLEELEQSGCGQLKHLIENKGNFSSINYPNIYSANSHCEWYLHASIATHYLQISLSQFSLENAYQCRYDFLTVIDVTENGNISHGPYCGNSIPHVITGHGLFHIKFRSDASLNYKGFFASFVELNERPQEESGCGGVKFLNGTNGTFQTAGFPLAYEANLDCTWVIEVEDGYKVRLNFQQFSLESSSSCKYDWAMLYNGEFAFEAQRIDTLCGYDVKLEDIFESTSNVMRIDFHSDFSFNKQGFLAMYTAVSPGSSRSSVHQRENHLQEKRSGGCQDSIFTDEEGVIEYKQGDHTGNTRCLFRILTNHLHVIRLWLRKLSSLNLHENDSIKIYDKIDVDDIYSGVVKPVFQFTGIIGYLDSLPAYLDYNGGEISMLFSSDGQHGDTSFELIYKLMQDKSSTTNPKQLWNDHHGKWPWMVSLFGSSKYYFCSGVIISSRWIATAATCNLRSSEIHIIFPEGTNPKKIWEVEKIVVHPEFKMIYNVPQNDLALIQLVDPIEHIPPVCLPVASNIYSDCHVLKIPRLAGSAAFPDIVRISSVDTLAHDICMREWHLRITDDMLCGRINGTNSCQRDVGGPLVCQSPSDDAWYFVGISSWGPKICNDNTAHHRLPDVYVSVAYFLKWITKIIQ.

Positions 1 to 19 are cleaved as a signal peptide; the sequence is MIVTFVALALSCCTPQVTA. Residues 36-280 enclose the Peptidase S1 1 domain; it reads IVGGEMAKLG…YSSWIANYTQ (245 aa). A disulfide bridge connects residues Cys61 and Cys77. Catalysis depends on charge relay system residues His76 and Asp132. Disulfide bonds link Cys166–Cys233, Cys199–Cys212, and Cys223–Cys256. Ser227 serves as the catalytic Charge relay system. Asn277 and Asn303 each carry an N-linked (GlcNAc...) asparagine glycan. 4 disulfide bridges follow: Cys300-Cys330, Cys358-Cys386, Cys432-Cys460, and Cys486-Cys507. 2 CUB domains span residues 300 to 423 and 432 to 545; these read CSSN…FHAV and CGGI…YYFS. 3 N-linked (GlcNAc...) asparagine glycosylation sites follow: Asn497, Asn513, and Asn549. A Peptidase S1 2 domain is found at 575–810; sequence IVNGDIAIAG…YIDWIIATAN (236 aa). Cys602 and Cys618 are disulfide-bonded. Active-site charge relay system residues include His617 and Asp665. Disulfide bonds link Cys700–Cys766, Cys730–Cys745, and Cys756–Cys786. N-linked (GlcNAc...) asparagine glycosylation is present at Asn748. The active-site Charge relay system is Ser760. An N-linked (GlcNAc...) asparagine glycan is attached at Asn810. Intrachain disulfides connect Cys830–Cys859, Cys889–Cys913, Cys956–Cys984, Cys1012–Cys1034, Cys1080–Cys1108, Cys1135–Cys1158, and Cys1221–Cys1246. 4 CUB domains span residues 830 to 949, 956 to 1070, 1080 to 1197, and 1221 to 1341; these read CIQL…YRLE, CGQL…FVEL, CGGV…YTAV, and CQDS…YKLM. N-linked (GlcNAc...) asparagine glycosylation is found at Asn968, Asn1027, Asn1087, and Asn1090. The N-linked (GlcNAc...) asparagine glycan is linked to Asn1273. The region spanning 1314-1575 is the Peptidase S1 3 domain; that stretch reads YNGGEISMLF…FLKWITKIIQ (262 aa). Cystine bridges form between Cys1376–Cys1392 and Cys1493–Cys1507. Asn1511 is a glycosylation site (N-linked (GlcNAc...) asparagine).

The protein belongs to the peptidase S1 family. Expressed in the testis and ovary. Expressed in the gonads and gametes. Expressed in the follicle cells covering the vitelline coat of ovarian egg.

The protein resides in the secreted. In terms of biological role, may be responsible for elevation of the vitelline coat at the late developmental stage of oogenesis and during fertilization in ovarian eggs. This is Ovochymase from Halocynthia roretzi (Sea squirt).